The following is a 543-amino-acid chain: Chaperonin GroEL (543 aa).

Residues 29–32, lysine 50, 86–90, glycine 413, 480–482, and aspartate 496 each bind ATP; these read TLGP, DGTTT, and NAA. Residues 524 to 543 form a disordered region; the sequence is EKPEKKESTPASAGAGDMDF.

This sequence belongs to the chaperonin (HSP60) family. In terms of assembly, forms a cylinder of 14 subunits composed of two heptameric rings stacked back-to-back. Interacts with the co-chaperonin GroES.

The protein localises to the cytoplasm. It catalyses the reaction ATP + H2O + a folded polypeptide = ADP + phosphate + an unfolded polypeptide.. Functionally, together with its co-chaperonin GroES, plays an essential role in assisting protein folding. The GroEL-GroES system forms a nano-cage that allows encapsulation of the non-native substrate proteins and provides a physical environment optimized to promote and accelerate protein folding. The chain is Chaperonin GroEL from Thermus thermophilus (strain ATCC BAA-163 / DSM 7039 / HB27).